The sequence spans 341 residues: Probable cytosolic iron-sulfur protein assembly protein Ciao1 (341 aa).

WD repeat units lie at residues 12–51 (GHAGRVWSAAWHPGGKLFASCGEDKTIRVWNKSDTDRWVA), 58–97 (GHTRTIRELAWSCCGHYLASASFDTTVAVWDKKSGEFECN), 102–141 (GHDNEVKSVTWSRSGNLLATCSRDKSVWIWEIHHAPDQED), 151–190 (GHTQDVKKVCWHPQEDLLASASYDNTIRMYRQDLADSEWE), 197–236 (SHSSTVWSISFDATGQRLASCSEDTTVKVWQQYGPDNALG), 255–294 (YHSRSVYDIDWCKQTGLLATACGDDTVRIFREASDSDRNE), and 305–341 (AHSQDANKVAWHPTVPGLLLTASDDGEIKLWQYVDAD).

The protein belongs to the WD repeat CIA1 family.

Essential component of the cytosolic iron-sulfur (Fe/S) protein assembly machinery. Required for the maturation of extramitochondrial Fe/S proteins. This chain is Probable cytosolic iron-sulfur protein assembly protein Ciao1, found in Anopheles gambiae (African malaria mosquito).